A 153-amino-acid polypeptide reads, in one-letter code: Insulin-like growth factor 1 (153 aa).

The tract at residues 49–77 (GPETLCGAELVDALQFVCGDRGFYFNKPT) is b. Disulfide bonds link Cys-54-Cys-96, Cys-66-Cys-109, and Cys-95-Cys-100. The tract at residues 78–89 (GYGSSSRRAPQT) is c. Positions 90-110 (GIVDECCFRSCDLRRLEMYCA) are a. The tract at residues 111 to 118 (PLKPAKSA) is d. Residues 119–153 (RSVRAQRHTDMPKAQKEVHLKNASRGSAGNKNYRM) constitute a propeptide, e peptide. The segment at 120–153 (SVRAQRHTDMPKAQKEVHLKNASRGSAGNKNYRM) is disordered. Over residues 125–138 (RHTDMPKAQKEVHL) the composition is skewed to basic and acidic residues. Residues 142–153 (SRGSAGNKNYRM) are compositionally biased toward polar residues.

The protein belongs to the insulin family. In terms of assembly, forms a ternary complex with IGFR1 and ITGAV:ITGB3. Forms a ternary complex with IGFR1 and ITGA6:ITGB4. Forms a ternary complex with IGFBP3 and ALS.

The protein localises to the secreted. Its function is as follows. The insulin-like growth factors, isolated from plasma, are structurally and functionally related to insulin but have a much higher growth-promoting activity. May be a physiological regulator of [1-14C]-2-deoxy-D-glucose (2DG) transport and glycogen synthesis in osteoblasts. Stimulates glucose transport in bone-derived osteoblastic (PyMS) cells and is effective at much lower concentrations than insulin, not only regarding glycogen and DNA synthesis but also with regard to enhancing glucose uptake. May play a role in synapse maturation. Ca(2+)-dependent exocytosis of IGF1 is required for sensory perception of smell in the olfactory bulb. Acts as a ligand for IGF1R. Binds to the alpha subunit of IGF1R, leading to the activation of the intrinsic tyrosine kinase activity which autophosphorylates tyrosine residues in the beta subunit thus initiating a cascade of down-stream signaling events leading to activation of the PI3K-AKT/PKB and the Ras-MAPK pathways. Binds to integrins ITGAV:ITGB3 and ITGA6:ITGB4. Its binding to integrins and subsequent ternary complex formation with integrins and IGFR1 are essential for IGF1 signaling. Induces the phosphorylation and activation of IGFR1, MAPK3/ERK1, MAPK1/ERK2 and AKT1. As part of the MAPK/ERK signaling pathway, acts as a negative regulator of apoptosis in cardiomyocytes via promotion of STUB1/CHIP-mediated ubiquitination and degradation of ICER-type isoforms of CREM. In Panthera tigris altaica (Siberian tiger), this protein is Insulin-like growth factor 1.